Reading from the N-terminus, the 671-residue chain is Palmitoleoyl-protein carboxylesterase NOTUM (671 aa).

A signal peptide spans 1–46 (MAVEQIDKMAAKAGEATNKWIKPQQPLLTLLLLLATFSQLPAVCSS). A glycan (N-linked (GlcNAc...) asparagine) is linked at N95. Residues S237 and D338 each act as charge relay system in the active site. N372 is a glycosylation site (N-linked (GlcNAc...) asparagine). H384 (charge relay system) is an active-site residue. The tract at residues 411-592 (HSTRSRRHDK…TKSKKRHRVP (182 aa)) is disordered. Residues 439–454 (NQRHQRHRQRLQRQKH) show a composition bias toward basic residues. The segment covering 470–486 (LSKEEREERKRLRQEQR) has biased composition (basic and acidic residues). Basic residues predominate over residues 487–497 (QRRKQRRRQQQ). Positions 505–514 (QEHRNKKDNS) are enriched in basic and acidic residues. Positions 570 to 583 (PQKTRSSNNASAGT) are enriched in polar residues. N-linked (GlcNAc...) asparagine glycosylation is found at N578 and N612.

This sequence belongs to the pectinacetylesterase family. Notum subfamily.

It localises to the secreted. The protein resides in the cell surface. The catalysed reaction is [Wnt protein]-O-(9Z)-hexadecenoyl-L-serine + H2O = [Wnt protein]-L-serine + (9Z)-hexadecenoate + H(+). Carboxylesterase that acts as a key negative regulator of the Wnt signaling pathway by specifically mediating depalmitoleoylation of WNT proteins. Serine palmitoleoylation of WNT proteins is required for efficient binding to frizzled receptors. Also acts as a regulator of long-range activity of Hedgehog (hh), possibly by regulating the switch between low and high level hh pathway signaling. The chain is Palmitoleoyl-protein carboxylesterase NOTUM from Drosophila melanogaster (Fruit fly).